We begin with the raw amino-acid sequence, 115 residues long: Large ribosomal subunit protein bL19 (115 aa).

This sequence belongs to the bacterial ribosomal protein bL19 family.

This protein is located at the 30S-50S ribosomal subunit interface and may play a role in the structure and function of the aminoacyl-tRNA binding site. The chain is Large ribosomal subunit protein bL19 from Thermosipho africanus (strain TCF52B).